A 355-amino-acid chain; its full sequence is 3-dehydroquinate synthase (355 aa).

Residues 66–71, 100–104, 124–125, Lys136, Lys145, and 163–166 each bind NAD(+); these read SGETTK, GATGD, TT, and FLET. The Zn(2+) site is built by Glu178, His242, and His256.

Belongs to the sugar phosphate cyclases superfamily. Dehydroquinate synthase family. Co(2+) serves as cofactor. The cofactor is Zn(2+). Requires NAD(+) as cofactor.

The protein localises to the cytoplasm. The catalysed reaction is 7-phospho-2-dehydro-3-deoxy-D-arabino-heptonate = 3-dehydroquinate + phosphate. It functions in the pathway metabolic intermediate biosynthesis; chorismate biosynthesis; chorismate from D-erythrose 4-phosphate and phosphoenolpyruvate: step 2/7. Functionally, catalyzes the conversion of 3-deoxy-D-arabino-heptulosonate 7-phosphate (DAHP) to dehydroquinate (DHQ). The sequence is that of 3-dehydroquinate synthase from Staphylococcus saprophyticus subsp. saprophyticus (strain ATCC 15305 / DSM 20229 / NCIMB 8711 / NCTC 7292 / S-41).